The primary structure comprises 762 residues: 5-methyltetrahydropteroyltriglutamate--homocysteine methyltransferase (762 aa).

Residues 18–21 (REWK) and Lys-112 contribute to the 5-methyltetrahydropteroyltri-L-glutamate site. Residues 435-437 (IGS) and Glu-488 contribute to the L-homocysteine site. L-methionine contacts are provided by residues 435–437 (IGS) and Glu-488. 5-methyltetrahydropteroyltri-L-glutamate contacts are provided by residues 519–520 (RC) and Trp-565. Residue Asp-603 coordinates L-homocysteine. Asp-603 contributes to the L-methionine binding site. Residue Glu-609 participates in 5-methyltetrahydropteroyltri-L-glutamate binding. 3 residues coordinate Zn(2+): His-645, Cys-647, and Glu-669. His-698 functions as the Proton donor in the catalytic mechanism. Cys-730 serves as a coordination point for Zn(2+).

It belongs to the vitamin-B12 independent methionine synthase family. Zn(2+) serves as cofactor.

It carries out the reaction 5-methyltetrahydropteroyltri-L-glutamate + L-homocysteine = tetrahydropteroyltri-L-glutamate + L-methionine. The protein operates within amino-acid biosynthesis; L-methionine biosynthesis via de novo pathway; L-methionine from L-homocysteine (MetE route): step 1/1. Catalyzes the transfer of a methyl group from 5-methyltetrahydrofolate to homocysteine resulting in methionine formation. In Bacillus velezensis (strain DSM 23117 / BGSC 10A6 / LMG 26770 / FZB42) (Bacillus amyloliquefaciens subsp. plantarum), this protein is 5-methyltetrahydropteroyltriglutamate--homocysteine methyltransferase.